A 78-amino-acid polypeptide reads, in one-letter code: Ferredoxin (78 aa).

4Fe-4S ferredoxin-type domains follow at residues 2–29 and 30–59; these read FVIT…HEGP and DQYY…QEEF. Cys8 and Cys16 together coordinate [3Fe-4S] cluster. [4Fe-4S] cluster-binding residues include Cys20, Cys39, Cys42, and Cys45. Cys49 contributes to the [3Fe-4S] cluster binding site.

[3Fe-4S] cluster is required as a cofactor. [4Fe-4S] cluster serves as cofactor.

Its function is as follows. Ferredoxins are iron-sulfur proteins that transfer electrons in a wide variety of metabolic reactions. The polypeptide is Ferredoxin (Alicyclobacillus acidocaldarius subsp. acidocaldarius (Bacillus acidocaldarius)).